The following is a 386-amino-acid chain: Dual-specificity RNA methyltransferase RlmN (386 aa).

Glu-94 serves as the catalytic Proton acceptor. The 242-residue stretch at Glu-100–Asp-341 folds into the Radical SAM core domain. The cysteines at positions 107 and 347 are disulfide-linked. Residues Cys-114, Cys-118, and Cys-121 each contribute to the [4Fe-4S] cluster site. Residues Gly-173–Glu-174, Ser-205, Ser-227–His-229, and Asn-304 each bind S-adenosyl-L-methionine. Cys-347 acts as the S-methylcysteine intermediate in catalysis.

This sequence belongs to the radical SAM superfamily. RlmN family. [4Fe-4S] cluster is required as a cofactor.

The protein localises to the cytoplasm. It carries out the reaction adenosine(2503) in 23S rRNA + 2 reduced [2Fe-2S]-[ferredoxin] + 2 S-adenosyl-L-methionine = 2-methyladenosine(2503) in 23S rRNA + 5'-deoxyadenosine + L-methionine + 2 oxidized [2Fe-2S]-[ferredoxin] + S-adenosyl-L-homocysteine. The catalysed reaction is adenosine(37) in tRNA + 2 reduced [2Fe-2S]-[ferredoxin] + 2 S-adenosyl-L-methionine = 2-methyladenosine(37) in tRNA + 5'-deoxyadenosine + L-methionine + 2 oxidized [2Fe-2S]-[ferredoxin] + S-adenosyl-L-homocysteine. Specifically methylates position 2 of adenine 2503 in 23S rRNA and position 2 of adenine 37 in tRNAs. m2A2503 modification seems to play a crucial role in the proofreading step occurring at the peptidyl transferase center and thus would serve to optimize ribosomal fidelity. The protein is Dual-specificity RNA methyltransferase RlmN of Herminiimonas arsenicoxydans.